The sequence spans 453 residues: Enolase (453 aa).

Q163 contributes to the (2R)-2-phosphoglycerate binding site. E205 serves as the catalytic Proton donor. Mg(2+)-binding residues include D258, E308, and D335. Positions 360, 389, 390, and 411 each coordinate (2R)-2-phosphoglycerate. Catalysis depends on K360, which acts as the Proton acceptor.

Belongs to the enolase family. Requires Mg(2+) as cofactor.

Its subcellular location is the cytoplasm. It is found in the secreted. The protein resides in the cell surface. The catalysed reaction is (2R)-2-phosphoglycerate = phosphoenolpyruvate + H2O. Its pathway is carbohydrate degradation; glycolysis; pyruvate from D-glyceraldehyde 3-phosphate: step 4/5. Catalyzes the reversible conversion of 2-phosphoglycerate (2-PG) into phosphoenolpyruvate (PEP). It is essential for the degradation of carbohydrates via glycolysis. The sequence is that of Enolase from Mesoplasma florum (strain ATCC 33453 / NBRC 100688 / NCTC 11704 / L1) (Acholeplasma florum).